Here is a 402-residue protein sequence, read N- to C-terminus: GTPase Obg (402 aa).

The Obg domain occupies 1 to 159 (MRFIDEAIVT…KELKFELKVV (159 aa)). The 175-residue stretch at 160 to 334 (ADVGLIGLPN…VKYHLMNEIE (175 aa)) folds into the OBG-type G domain. Residues 166–173 (GLPNAGKS), 191–195 (FTTLV), 213–216 (DIPG), 283–286 (NKID), and 315–317 (STL) contribute to the GTP site. The Mg(2+) site is built by serine 173 and threonine 193. Positions 382-402 (AAFNNELDDDDDDGVEVVYAP) are disordered. Positions 387–396 (ELDDDDDDGV) are enriched in acidic residues.

The protein belongs to the TRAFAC class OBG-HflX-like GTPase superfamily. OBG GTPase family. Monomer. Mg(2+) is required as a cofactor.

The protein localises to the cytoplasm. Functionally, an essential GTPase which binds GTP, GDP and possibly (p)ppGpp with moderate affinity, with high nucleotide exchange rates and a fairly low GTP hydrolysis rate. Plays a role in control of the cell cycle, stress response, ribosome biogenesis and in those bacteria that undergo differentiation, in morphogenesis control. The sequence is that of GTPase Obg from Psychrobacter sp. (strain PRwf-1).